We begin with the raw amino-acid sequence, 346 residues long: MGTSSDPIQDGSDEQQKRSEIYTYEAPWHIYAMNWSVRRDKKYRLAITSLLEQYPNRVEIVQLDESNGEIRSDPNLSFEHPYPPTKTIFIPDKECQRPDLLATSSDFLRLWRIADDHSRVELKSCLNSNKNSEFCGPLTSFDWNEAEPRRIGTSSTDTTCTIWDIEREAVDTQLIAHDKEVFDIAWGGVGVFASVSADGSVRVFDLRDKEHSTIIYESSEPDTPLVRLGWNKQDPRYMATIIMDSAKVVVLDIRFPALPVVELQRHQASVNAIAWAPHSSCHICTAGDDSQALIWDISSMGQHVEGGLDPILAYTAGAEIEQLQWSSSQPDWVAIAFSTKLQILRV.

Methionine 1 is modified (N-acetylmethionine). 4 WD repeats span residues 79–121 (EHPY…SRVE), 133–173 (EFCG…VDTQ), 176–214 (AHDK…HSTI), and 265–305 (RHQA…QHVE).

It localises to the nucleus. Clock protein essential for the proper expression phase and period length of both the oscillator and output genes known to participate in photoperiod sensing. Required for the expression of APRR9, APRR7, and APRR5. Regulated by APRR9 and APRR7 at the transcriptional level, indicating the existence of a positive feedback loop within the circadian clock. May function to delay the expression of the morning genes until dawn approaches. The chain is WD repeat-containing protein LWD1 (LWD1) from Arabidopsis thaliana (Mouse-ear cress).